A 175-amino-acid polypeptide reads, in one-letter code: Myosin regulatory light chain 2, atrial isoform (175 aa).

A2 carries the post-translational modification N-acetylalanine. Residues S22 and S23 each carry the phosphoserine modification. EF-hand domains lie at 32 to 67, 102 to 137, and 138 to 173; these read AQIQ…LGKV, DPEE…QADK, and FSPA…GDEK. The Ca(2+) site is built by D45, N47, D49, and D56.

Myosin is a hexamer of 2 heavy chains and 4 light chains. In terms of tissue distribution, predominantly expressed in adult atrial muscle.

The polypeptide is Myosin regulatory light chain 2, atrial isoform (MYL7) (Homo sapiens (Human)).